The following is a 98-amino-acid chain: NADH-ubiquinone oxidoreductase chain 4L (98 aa).

The next 3 membrane-spanning stretches (helical) occupy residues 1-21 (MSLV…GLLM), 29-49 (ALLC…LTIL), and 61-81 (IILL…LIMI).

This sequence belongs to the complex I subunit 4L family. Core subunit of respiratory chain NADH dehydrogenase (Complex I) which is composed of 45 different subunits.

It is found in the mitochondrion inner membrane. It carries out the reaction a ubiquinone + NADH + 5 H(+)(in) = a ubiquinol + NAD(+) + 4 H(+)(out). In terms of biological role, core subunit of the mitochondrial membrane respiratory chain NADH dehydrogenase (Complex I) which catalyzes electron transfer from NADH through the respiratory chain, using ubiquinone as an electron acceptor. Part of the enzyme membrane arm which is embedded in the lipid bilayer and involved in proton translocation. In Monodon monoceros (Narwhal), this protein is NADH-ubiquinone oxidoreductase chain 4L (MT-ND4L).